Here is a 392-residue protein sequence, read N- to C-terminus: Bifunctional enzyme Fae/Hps (392 aa).

The formaldehyde-activating enzyme stretch occupies residues 1–161; that stretch reads MFQIGEALMG…EESNKSTHAI (161 aa). The Proton donor role is filled by His17. Substrate-binding residues include Asp19, Leu48, Lys66, Thr68, and Gln83. The interval 162 to 392 is 3-hexulose-6-phosphate synthase; that stretch reads MGFKVTRLWD…IDQFRVMTDF (231 aa).

It in the N-terminal section; belongs to the formaldehyde-activating enzyme family. This sequence in the C-terminal section; belongs to the HPS/KGPDC family. HPS subfamily.

It carries out the reaction 5,6,7,8-tetrahydromethanopterin + formaldehyde = 5,10-methylenetetrahydromethanopterin + H2O. The catalysed reaction is D-ribulose 5-phosphate + formaldehyde = D-arabino-hex-3-ulose 6-phosphate. Its pathway is carbohydrate biosynthesis; D-ribose 5-phosphate biosynthesis. Catalyzes the condensation of formaldehyde with tetrahydromethanopterin (H(4)MPT) to 5,10-methylenetetrahydromethanopterin. Its function is as follows. Catalyzes the reversible formation of ribulose-5-phosphate and formaldehyde from 3-hexulose-6-phosphate. This chain is Bifunctional enzyme Fae/Hps, found in Methanosarcina mazei (strain ATCC BAA-159 / DSM 3647 / Goe1 / Go1 / JCM 11833 / OCM 88) (Methanosarcina frisia).